The following is a 299-amino-acid chain: ATP phosphoribosyltransferase (299 aa).

It belongs to the ATP phosphoribosyltransferase family. Long subfamily. In terms of assembly, equilibrium between an active dimeric form, an inactive hexameric form and higher aggregates. Interconversion between the various forms is largely reversible and is influenced by the natural substrates and inhibitors of the enzyme. The cofactor is Mg(2+).

The protein localises to the cytoplasm. The catalysed reaction is 1-(5-phospho-beta-D-ribosyl)-ATP + diphosphate = 5-phospho-alpha-D-ribose 1-diphosphate + ATP. The protein operates within amino-acid biosynthesis; L-histidine biosynthesis; L-histidine from 5-phospho-alpha-D-ribose 1-diphosphate: step 1/9. Its activity is regulated as follows. Feedback inhibited by histidine. Functionally, catalyzes the condensation of ATP and 5-phosphoribose 1-diphosphate to form N'-(5'-phosphoribosyl)-ATP (PR-ATP). Has a crucial role in the pathway because the rate of histidine biosynthesis seems to be controlled primarily by regulation of HisG enzymatic activity. This is ATP phosphoribosyltransferase from Buchnera aphidicola subsp. Acyrthosiphon pisum (strain 5A).